The primary structure comprises 378 residues: Enoyl-[acyl-carrier-protein] reductase 1, mitochondrial (378 aa).

Tyrosine 59 (proton donor) is an active-site residue. NADP(+) is bound by residues asparagine 151, 180-183, 203-206, 284-287, 309-311, and lysine 372; these read NSQV, RDGK, YGGM, and YWL.

It belongs to the zinc-containing alcohol dehydrogenase family. Quinone oxidoreductase subfamily. Homodimer.

It localises to the mitochondrion matrix. The catalysed reaction is a 2,3-saturated acyl-[ACP] + NADP(+) = a (2E)-enoyl-[ACP] + NADPH + H(+). Its function is as follows. Catalyzes the NADPH-dependent reduction of trans-2-enoyl thioesters in mitochondrial fatty acid synthesis (fatty acid synthesis type II). Fatty acid chain elongation in mitochondria uses acyl carrier protein (ACP) as an acyl group carrier, but the enzyme accepts both ACP and CoA thioesters as substrates in vitro. Required for respiration and the maintenance of the mitochondrial compartment. The chain is Enoyl-[acyl-carrier-protein] reductase 1, mitochondrial (ETR1) from Debaryomyces hansenii (strain ATCC 36239 / CBS 767 / BCRC 21394 / JCM 1990 / NBRC 0083 / IGC 2968) (Yeast).